The chain runs to 181 residues: tRNA (cytidine(56)-2'-O)-methyltransferase (181 aa).

S-adenosyl-L-methionine contacts are provided by residues Leu-88, 115–119 (GGEKV), and 133–140 (IGNQPHSE).

The protein belongs to the aTrm56 family. In terms of assembly, homodimer.

It is found in the cytoplasm. The catalysed reaction is cytidine(56) in tRNA + S-adenosyl-L-methionine = 2'-O-methylcytidine(56) in tRNA + S-adenosyl-L-homocysteine + H(+). Its function is as follows. Specifically catalyzes the AdoMet-dependent 2'-O-ribose methylation of cytidine at position 56 in tRNAs. The sequence is that of tRNA (cytidine(56)-2'-O)-methyltransferase from Thermofilum pendens (strain DSM 2475 / Hrk 5).